We begin with the raw amino-acid sequence, 504 residues long: Protein nucleotidyltransferase YdiU (504 aa).

ATP is bound by residues Gly-99, Gly-101, Arg-102, Lys-122, Asp-134, Gly-135, Arg-185, and Arg-192. Asp-261 (proton acceptor) is an active-site residue. Asn-262 and Asp-271 together coordinate Mg(2+). Asp-271 serves as a coordination point for ATP.

This sequence belongs to the SELO family. Mg(2+) is required as a cofactor. Requires Mn(2+) as cofactor.

It carries out the reaction L-seryl-[protein] + ATP = 3-O-(5'-adenylyl)-L-seryl-[protein] + diphosphate. The catalysed reaction is L-threonyl-[protein] + ATP = 3-O-(5'-adenylyl)-L-threonyl-[protein] + diphosphate. It catalyses the reaction L-tyrosyl-[protein] + ATP = O-(5'-adenylyl)-L-tyrosyl-[protein] + diphosphate. The enzyme catalyses L-histidyl-[protein] + UTP = N(tele)-(5'-uridylyl)-L-histidyl-[protein] + diphosphate. It carries out the reaction L-seryl-[protein] + UTP = O-(5'-uridylyl)-L-seryl-[protein] + diphosphate. The catalysed reaction is L-tyrosyl-[protein] + UTP = O-(5'-uridylyl)-L-tyrosyl-[protein] + diphosphate. Its function is as follows. Nucleotidyltransferase involved in the post-translational modification of proteins. It can catalyze the addition of adenosine monophosphate (AMP) or uridine monophosphate (UMP) to a protein, resulting in modifications known as AMPylation and UMPylation. The chain is Protein nucleotidyltransferase YdiU from Methylococcus capsulatus (strain ATCC 33009 / NCIMB 11132 / Bath).